The sequence spans 261 residues: Small ribosomal subunit protein uS2 (261 aa).

The protein belongs to the universal ribosomal protein uS2 family.

The polypeptide is Small ribosomal subunit protein uS2 (Thermodesulfovibrio yellowstonii (strain ATCC 51303 / DSM 11347 / YP87)).